The sequence spans 393 residues: Tryptophan 2,3-dioxygenase (393 aa).

Residues Phe56–His60 and Arg127 contribute to the substrate site. Heme is bound at residue His312. Thr327 provides a ligand contact to substrate.

It belongs to the tryptophan 2,3-dioxygenase family. Homotetramer. Dimer of dimers. The cofactor is heme.

The enzyme catalyses L-tryptophan + O2 = N-formyl-L-kynurenine. The protein operates within amino-acid degradation; L-tryptophan degradation via kynurenine pathway; L-kynurenine from L-tryptophan: step 1/2. Its pathway is pigment biosynthesis; ommochrome biosynthesis. Its activity is regulated as follows. Stimulated by low concentrations of hydrogen peroxide (5 uM), ascorbate (0.1-0.3 mM), and sodium hydrosulfite (0.1 mM). Inhibited by high concentrations of hydrogen peroxide (0.1 mM), ascorbate (10 mM), and sodium hydrosulfite (1 mM). Functionally, heme-dependent dioxygenase that catalyzes the oxidative cleavage of the L-tryptophan (L-Trp) pyrrole ring and converts L-tryptophan to N-formyl-L-kynurenine. Catalyzes the oxidative cleavage of the indole moiety. The protein is Tryptophan 2,3-dioxygenase of Aedes aegypti (Yellowfever mosquito).